The chain runs to 368 residues: Flagellar P-ring protein 1 (368 aa).

The signal sequence occupies residues 1–24; sequence MIFKQIRRLIAAALLAALSLPAAA.

The protein belongs to the FlgI family. The basal body constitutes a major portion of the flagellar organelle and consists of four rings (L,P,S, and M) mounted on a central rod.

The protein resides in the periplasm. The protein localises to the bacterial flagellum basal body. Its function is as follows. Assembles around the rod to form the L-ring and probably protects the motor/basal body from shearing forces during rotation. This is Flagellar P-ring protein 1 from Chromobacterium violaceum (strain ATCC 12472 / DSM 30191 / JCM 1249 / CCUG 213 / NBRC 12614 / NCIMB 9131 / NCTC 9757 / MK).